The following is a 322-amino-acid chain: Malate dehydrogenase (322 aa).

NAD(+) is bound by residues 10–15 (GSGQIG) and D34. R83 and R89 together coordinate substrate. NAD(+) is bound by residues N96 and 119–121 (ITN). Substrate is bound by residues N121 and R152. H176 serves as the catalytic Proton acceptor.

The protein belongs to the LDH/MDH superfamily. MDH type 3 family.

The enzyme catalyses (S)-malate + NAD(+) = oxaloacetate + NADH + H(+). Its function is as follows. Catalyzes the reversible oxidation of malate to oxaloacetate. The chain is Malate dehydrogenase from Nitrobacter winogradskyi (strain ATCC 25391 / DSM 10237 / CIP 104748 / NCIMB 11846 / Nb-255).